The primary structure comprises 511 residues: Type 2 DNA topoisomerase 6 subunit B-like (511 aa).

Residues 398–485 (DSAQGTEDAP…RALAPGRASL (88 aa)) are disordered. Polar residues predominate over residues 408–422 (DNSSLELLADTSGQA). Residues 440–451 (LRSARAPSPSEA) show a composition bias toward low complexity. Residues 466-475 (RGREHREAHG) are compositionally biased toward basic and acidic residues.

It belongs to the TOP6B-like family. In terms of assembly, heterotetramer of SPO11 and 2 TOP6BL chains. Interacts with SPO11. As to expression, detected in lung, spleen,colon and in skeletal muscle. Expressed in the ovaries, Fallopian tubes and uterus.

It localises to the chromosome. Component of a topoisomerase 6 complex specifically required for meiotic recombination. Together with SPO11, mediates DNA cleavage that forms the double-strand breaks (DSB) that initiate meiotic recombination. The complex promotes relaxation of negative and positive supercoiled DNA and DNA decatenation through cleavage and ligation cycles. This chain is Type 2 DNA topoisomerase 6 subunit B-like, found in Homo sapiens (Human).